Consider the following 279-residue polypeptide: Biotin synthase (279 aa).

Positions 2–232 (VRNSRLDICS…NVTIKIAAGR (231 aa)) constitute a Radical SAM core domain. [4Fe-4S] cluster-binding residues include Cys20, Cys24, and Cys27. [2Fe-2S] cluster-binding residues include Cys96, Cys156, and Lys227.

It belongs to the radical SAM superfamily. Biotin synthase family. Homodimer. It depends on [4Fe-4S] cluster as a cofactor. [2Fe-2S] cluster is required as a cofactor.

The catalysed reaction is (4R,5S)-dethiobiotin + (sulfur carrier)-SH + 2 reduced [2Fe-2S]-[ferredoxin] + 2 S-adenosyl-L-methionine = (sulfur carrier)-H + biotin + 2 5'-deoxyadenosine + 2 L-methionine + 2 oxidized [2Fe-2S]-[ferredoxin]. Its pathway is cofactor biosynthesis; biotin biosynthesis; biotin from 7,8-diaminononanoate: step 2/2. Catalyzes the conversion of dethiobiotin (DTB) to biotin by the insertion of a sulfur atom into dethiobiotin via a radical-based mechanism. The chain is Biotin synthase from Thermotoga neapolitana (strain ATCC 49049 / DSM 4359 / NBRC 107923 / NS-E).